The chain runs to 155 residues: Transcription antitermination protein NusB (155 aa).

It belongs to the NusB family.

Its function is as follows. Involved in transcription antitermination. Required for transcription of ribosomal RNA (rRNA) genes. Binds specifically to the boxA antiterminator sequence of the ribosomal RNA (rrn) operons. The sequence is that of Transcription antitermination protein NusB from Vibrio parahaemolyticus serotype O3:K6 (strain RIMD 2210633).